A 281-amino-acid chain; its full sequence is GDT1-like protein 4 (281 aa).

The N-terminal stretch at 1 to 22 (MARRVSTTRLLLLLLLVAAAAA) is a signal peptide. The next 6 membrane-spanning stretches (helical) occupy residues 66–86 (AGLG…VSEI), 105–125 (TVLS…TGLG), 137–157 (TNSA…YIAW), 188–208 (IFSR…FLAE), 226–246 (AVGV…FAVV), and 258–278 (GTVA…SYFY).

It belongs to the GDT1 family.

The protein localises to the membrane. The chain is GDT1-like protein 4 from Oryza sativa subsp. indica (Rice).